The following is a 235-amino-acid chain: 2-C-methyl-D-erythritol 4-phosphate cytidylyltransferase (235 aa).

It belongs to the IspD/TarI cytidylyltransferase family. IspD subfamily.

The catalysed reaction is 2-C-methyl-D-erythritol 4-phosphate + CTP + H(+) = 4-CDP-2-C-methyl-D-erythritol + diphosphate. It participates in isoprenoid biosynthesis; isopentenyl diphosphate biosynthesis via DXP pathway; isopentenyl diphosphate from 1-deoxy-D-xylulose 5-phosphate: step 2/6. In terms of biological role, catalyzes the formation of 4-diphosphocytidyl-2-C-methyl-D-erythritol from CTP and 2-C-methyl-D-erythritol 4-phosphate (MEP). In Pseudomonas fluorescens (strain SBW25), this protein is 2-C-methyl-D-erythritol 4-phosphate cytidylyltransferase.